We begin with the raw amino-acid sequence, 153 residues long: Transcriptional regulator MraZ (153 aa).

2 SpoVT-AbrB domains span residues 7-61 (KEKH…LPDV) and 90-133 (LEMV…EPGR).

It belongs to the MraZ family. As to quaternary structure, forms oligomers.

The protein localises to the cytoplasm. The protein resides in the nucleoid. This is Transcriptional regulator MraZ from Chlorobium luteolum (strain DSM 273 / BCRC 81028 / 2530) (Pelodictyon luteolum).